We begin with the raw amino-acid sequence, 389 residues long: Aromatic-amino-acid aminotransferase 2 (389 aa).

Lys-233 is subject to N6-(pyridoxal phosphate)lysine.

Belongs to the class-I pyridoxal-phosphate-dependent aminotransferase family. As to quaternary structure, homodimer. It depends on pyridoxal 5'-phosphate as a cofactor.

The catalysed reaction is an aromatic L-alpha-amino acid + 2-oxoglutarate = an aromatic oxo-acid + L-glutamate. Its function is as follows. Catalyzes the transamination of phenylalanine, tyrosine and tryptophan. Shows virtually no activity towards aspartic acid, alanine, valine or isoleucine. In Thermococcus litoralis (strain ATCC 51850 / DSM 5473 / JCM 8560 / NS-C), this protein is Aromatic-amino-acid aminotransferase 2.